The chain runs to 317 residues: Protein CbxX, plasmid (317 aa).

85–92 (GNPGTGKT) serves as a coordination point for ATP.

Belongs to the CbxX/CfxQ family.

Functionally, seems to be necessary for the expression of RuBisCO. The sequence is that of Protein CbxX, plasmid (cbxXP) from Cupriavidus necator (strain ATCC 17699 / DSM 428 / KCTC 22496 / NCIMB 10442 / H16 / Stanier 337) (Ralstonia eutropha).